A 203-amino-acid chain; its full sequence is Urease accessory protein UreG (203 aa).

12 to 19 (GPVGSGKT) contributes to the GTP binding site.

It belongs to the SIMIBI class G3E GTPase family. UreG subfamily. As to quaternary structure, homodimer. UreD, UreF and UreG form a complex that acts as a GTP-hydrolysis-dependent molecular chaperone, activating the urease apoprotein by helping to assemble the nickel containing metallocenter of UreC. The UreE protein probably delivers the nickel.

The protein localises to the cytoplasm. Functionally, facilitates the functional incorporation of the urease nickel metallocenter. This process requires GTP hydrolysis, probably effectuated by UreG. This is Urease accessory protein UreG from Nitrosococcus oceani (strain ATCC 19707 / BCRC 17464 / JCM 30415 / NCIMB 11848 / C-107).